Consider the following 234-residue polypeptide: DNA repair protein RecO (234 aa).

It belongs to the RecO family.

In terms of biological role, involved in DNA repair and RecF pathway recombination. The chain is DNA repair protein RecO from Idiomarina loihiensis (strain ATCC BAA-735 / DSM 15497 / L2-TR).